A 216-amino-acid chain; its full sequence is Adenylate kinase (216 aa).

10-15 is an ATP binding site; the sequence is GAGKGT. Positions 30-59 are NMP; it reads STGDMFRAAMKAETEMGLQAKSFIDKGALV. Residues T31, R36, 57-59, 85-88, and Q92 contribute to the AMP site; these read ALV and GFPR. Positions 126–163 are LID; sequence GRRICKECGATYHLEFNAPAKADVCDKCGGELYQRSDD. R127 is a binding site for ATP. 2 residues coordinate Zn(2+): C130 and C133. 136–137 is an ATP binding site; it reads TY. 2 residues coordinate Zn(2+): C150 and C153. AMP is bound by residues R160 and R171. Residue Q199 coordinates ATP.

It belongs to the adenylate kinase family. In terms of assembly, monomer.

Its subcellular location is the cytoplasm. It catalyses the reaction AMP + ATP = 2 ADP. Its pathway is purine metabolism; AMP biosynthesis via salvage pathway; AMP from ADP: step 1/1. Catalyzes the reversible transfer of the terminal phosphate group between ATP and AMP. Plays an important role in cellular energy homeostasis and in adenine nucleotide metabolism. In Bacillus anthracis (strain A0248), this protein is Adenylate kinase.